A 260-amino-acid chain; its full sequence is Ribosomal RNA small subunit methyltransferase G (260 aa).

Residues Gly-111, Phe-116, and Arg-181 each coordinate S-adenosyl-L-methionine.

This sequence belongs to the methyltransferase superfamily. RNA methyltransferase RsmG family.

Its subcellular location is the cytoplasm. The enzyme catalyses guanosine(527) in 16S rRNA + S-adenosyl-L-methionine = N(7)-methylguanosine(527) in 16S rRNA + S-adenosyl-L-homocysteine. Specifically methylates the N7 position of guanine in position 527 of 16S rRNA. In Nitrobacter hamburgensis (strain DSM 10229 / NCIMB 13809 / X14), this protein is Ribosomal RNA small subunit methyltransferase G.